The following is an 84-amino-acid chain: Esculentin-1B (84 aa).

Residues Met1–Cys22 form the signal peptide. Residues Glu23–Arg38 constitute a propeptide that is removed on maturation. Cys78 and Cys84 form a disulfide bridge.

Belongs to the frog skin active peptide (FSAP) family. Brevinin subfamily. Expressed by the skin glands.

It localises to the secreted. In terms of biological role, shows antibacterial activity against representative Gram-negative and Gram-positive bacterial species, and hemolytic activity. In Pelophylax lessonae (Pool frog), this protein is Esculentin-1B.